The primary structure comprises 322 residues: UPF0324 membrane protein BB4178 (322 aa).

Helical transmembrane passes span 13–35 (FIRQ…YGNF), 50–69 (FTAR…NISI), 76–98 (GLPG…TVAG), 108–127 (TAML…VLAF), 139–161 (AVAV…VIYH), 171–193 (ALGI…ASNI), 209–231 (VALL…AAGA), 241–260 (VPWF…LDIL), 273–292 (VFVL…FAQI), and 296–318 (GPRV…YGIV).

The protein belongs to the UPF0324 family.

It localises to the cell membrane. This Bordetella bronchiseptica (strain ATCC BAA-588 / NCTC 13252 / RB50) (Alcaligenes bronchisepticus) protein is UPF0324 membrane protein BB4178.